Consider the following 148-residue polypeptide: RxLR effector protein SFI7 (148 aa).

A signal peptide spans 1–22 (MRAYFVLLVAATAILTYGGATA). An N-linked (GlcNAc...) asparagine glycan is attached at asparagine 32. A RxLR-dEER motif is present at residues 44-58 (RSLRVAPSGGNGEER).

It belongs to the RxLR effector family.

The protein localises to the secreted. Its subcellular location is the host cytoplasm. The protein resides in the host cell membrane. In terms of biological role, effector that suppresses flg22-induced post-translational MAP kinase activation in tomato but not in Arabidopsis. The perception of highly conserved pathogen- or microbe-associated molecular patterns (PAMPs/MAMPs), such as flg22, triggers converging signaling pathways recruiting MAP kinase cascades and inducing transcriptional re-programming, yielding a generic antimicrobial response. Also partially attenuates INF1-triggered cell death. This Phytophthora infestans (strain T30-4) (Potato late blight agent) protein is RxLR effector protein SFI7.